Consider the following 411-residue polypeptide: Flavohemoprotein (411 aa).

Residues 5–142 (TLSQETKQIV…IADVFIQVEK (138 aa)) form the Globin domain. Position 89 (His-89) interacts with heme b. Active-site charge relay system residues include Tyr-99 and Glu-141. The tract at residues 153–411 (GGWREFRSFV…FGPAGTLASS (259 aa)) is reductase. An FAD-binding FR-type domain is found at 156–267 (REFRSFVVEK…TAPAGDFTLQ (112 aa)). FAD is bound by residues Tyr-194 and 210–213 (RQYS). Residue 280-285 (GVGITP) participates in NADP(+) binding. 401–404 (FFGP) lines the FAD pocket.

This sequence belongs to the globin family. Two-domain flavohemoproteins subfamily. In the C-terminal section; belongs to the flavoprotein pyridine nucleotide cytochrome reductase family. The cofactor is heme b. FAD serves as cofactor.

It carries out the reaction 2 nitric oxide + NADPH + 2 O2 = 2 nitrate + NADP(+) + H(+). The catalysed reaction is 2 nitric oxide + NADH + 2 O2 = 2 nitrate + NAD(+) + H(+). Is involved in NO detoxification in an aerobic process, termed nitric oxide dioxygenase (NOD) reaction that utilizes O(2) and NAD(P)H to convert NO to nitrate, which protects the bacterium from various noxious nitrogen compounds. Therefore, plays a central role in the inducible response to nitrosative stress. The sequence is that of Flavohemoprotein from Halalkalibacterium halodurans (strain ATCC BAA-125 / DSM 18197 / FERM 7344 / JCM 9153 / C-125) (Bacillus halodurans).